A 345-amino-acid polypeptide reads, in one-letter code: MLLLGLLLLTSALAGQRTGTRAESNLSSKLQLSSDKEQNGVQDPRHERVVTISGNGSIHSPKFPHTYPRNMVLVWRLVAVDENVRIQLTFDERFGLEDPEDDICKYDFVEVEEPSDGSVLGRWCGSGTVPGKQTSKGNHIRIRFVSDEYFPSEPGFCIHYSIIMPQVTETTSPSVLPPSSLSLDLLNNAVTAFSTLEELIRYLEPDRWQVDLDSLYKPTWQLLGKAFLYGKKSKVVNLNLLKEEVKLYSCTPRNFSVSIREELKRTDTIFWPGCLLVKRCGGNCACCLHNCNECQCVPRKVTKKYHEVLQLRPKTGVKGLHKSLTDVALEHHEECDCVCRGNAGG.

An N-terminal signal peptide occupies residues 1–22 (MLLLGLLLLTSALAGQRTGTRA). Residues 24–33 (SNLSSKLQLS) are compositionally biased toward polar residues. The interval 24–45 (SNLSSKLQLSSDKEQNGVQDPR) is disordered. N25 carries N-linked (GlcNAc...) asparagine glycosylation. Residues 34-45 (SDKEQNGVQDPR) are compositionally biased toward basic and acidic residues. The region spanning 46 to 163 (HERVVTISGN…PGFCIHYSII (118 aa)) is the CUB domain. An N-linked (GlcNAc...) asparagine glycan is attached at N55. 4 disulfide bridges follow: C104-C124, C250-C294, C280-C335, and C287-C337.

Belongs to the PDGF/VEGF growth factor family. In terms of assembly, homodimer; disulfide-linked. Interacts with PDGFRA homodimers, and with heterodimers formed by PDGFRA and PDGFRB. Interacts (via CUB domain) with PLAT (via kringle domain). Proteolytic removal of the N-terminal CUB domain releasing the core domain is necessary for unmasking the receptor-binding epitopes of the core domain. Cleavage after basic residues in the hinge region (region connecting the CUB and growth factor domains) gives rise to the receptor-binding form. Cleaved by PLAT and PLG. Post-translationally, sumoylated by SUMO1. In terms of processing, N-glycosylated. As to expression, mainly expressed in kidney, testis, liver, heart and brain (at protein level). Highly expressed in airway epithelium, interstitial cells and alveolar macrophages in the lung of mice overexpressing IL13. Expressed in the ovaries.

It localises to the cytoplasm. The protein resides in the cytosol. It is found in the secreted. Its subcellular location is the nucleus. The protein localises to the cytoplasmic granule. It localises to the cell membrane. Growth factor that plays an essential role in the regulation of embryonic development, cell proliferation, cell migration, survival and chemotaxis. Potent mitogen and chemoattractant for cells of mesenchymal origin. Required for normal skeleton formation during embryonic development, especially for normal development of the craniofacial skeleton and for normal development of the palate. Required for normal skin morphogenesis during embryonic development. Plays an important role in wound healing, where it appears to be involved in three stages: inflammation, proliferation and remodeling. Plays an important role in angiogenesis and blood vessel development. Involved in fibrotic processes, in which transformation of interstitial fibroblasts into myofibroblasts plus collagen deposition occurs. The CUB domain has mitogenic activity in coronary artery smooth muscle cells, suggesting a role beyond the maintenance of the latency of the PDGF domain. In the nucleus, PDGFC seems to have additional function. This chain is Platelet-derived growth factor C (Pdgfc), found in Mus musculus (Mouse).